Reading from the N-terminus, the 4456-residue chain is Dynein axonemal heavy chain 2 (4456 aa).

Residues 1-12 are compositionally biased toward basic residues; the sequence is MASKAEKKRKVA. A disordered region spans residues 1 to 55; that stretch reads MASKAEKKRKVAGRGGARAGRVVRAPQSTAGPGATEASLLPDGQEPEPESGKEDS. The tract at residues 1 to 1795 is stem; that stretch reads MASKAEKKRK…RQTNTQFQYG (1795 aa). Positions 1218–1274 form a coiled coil; the sequence is LDQIAQMRAMLMAMRDEENNLRSNLGIFKIEQPVSKDLQILEKELDALQQVWEITRD. One copy of the TPR 1 repeat lies at 1439–1474; it reads EDNQVALSTMKASRFVKAFEKDVDHWERCLSLILEV. 4 AAA regions span residues 1794–2015, 2075–2302, 2407–2654, and 2751–3003; these read YGYE…LLRY, DTIE…DNCN, RYPP…VFQG, and EYNL…LRRY. Residues 1832 to 1839, 2113 to 2120, and 2445 to 2452 contribute to the ATP site; these read GPAGTGKT, GGTGSSKT, and GPVGTGKT. Residues 2750-2783 form a TPR 2 repeat; sequence NEYNLSPSVVPMQLVLFREAIEHITRIVRVIGQP. 2791-2798 serves as a coordination point for ATP; the sequence is GIGGSGRQ. The tract at residues 3018-3301 is stalk; that stretch reads YKKLLGEKRQ…EELRKKSEEM (284 aa). Residues 3041–3078 adopt a coiled-coil conformation; sequence FKIDETREKVEVMSLELEDAKKKVAEFQKQCEEYLVII. Residues 3101–3134 form a TPR 3 repeat; sequence IEEVKCQALADNAQKDLEEALPALEEAMRALESL. Coiled coils occupy residues 3245 to 3333 and 3552 to 3596; these read KRIR…EEDL and VRKE…GSLL. AAA stretches follow at residues 3387–3617 and 3833–4052; these read LTNP…EVTE and VTSF…LLSL. TPR repeat units lie at residues 4101-4134 and 4135-4169; these read TTPF…LPSM and DPPE…QPQI.

This sequence belongs to the dynein heavy chain family. Part of the axonemal inner dynein arm complex that consists of at least two heavy chains and a number of intermediate and light chains. Interacts with DNAI4.

The protein resides in the cytoplasm. It localises to the cytoskeleton. It is found in the cilium axoneme. Its subcellular location is the flagellum axoneme. As part of the axonemal inner dynein arm complex plays a central role in ciliary beat. Expressed in sperm flagellum, it is required for sperm motility. Dyneins are microtubule-based molecular motors possessing ATPase activities that can convert the chemical energy of ATP into relative sliding between adjacent microtubule doublets to generate ciliary bending. This is Dynein axonemal heavy chain 2 from Mus musculus (Mouse).